Consider the following 278-residue polypeptide: MTLQIIPEISSLRARLAGENSIALVPTMGNLHAGHIHLVELARQRAGCVVTSIFVNPLQFGANEDLDNYPRTLAEDCAKLQAAGADIVFTPSVQEMYPTTQTMRITPPPIANELCGAARPGHFDGVATVVMKLFNIVQPHIAVFGKKDFQQLFIIRELVRQFNLPIDIIAGETQREHTGLALSSRNGYLNEGQKLEAQRLYRTLKLIVDNVQQGNRDYPAIEAQSSQYLTQLGWIVDYISIRSSTTLLPASLDDHNLVVLAAARQGNTRLIDNIEFSV.

28 to 35 is an ATP binding site; it reads MGNLHAGH. His35 (proton donor) is an active-site residue. A (R)-pantoate-binding site is contributed by Gln59. Residue Gln59 participates in beta-alanine binding. ATP is bound at residue 145–148; it reads GKKD. Position 151 (Gln151) interacts with (R)-pantoate. An ATP-binding site is contributed by 182-185; it reads LSSR.

It belongs to the pantothenate synthetase family. As to quaternary structure, homodimer.

It is found in the cytoplasm. The catalysed reaction is (R)-pantoate + beta-alanine + ATP = (R)-pantothenate + AMP + diphosphate + H(+). The protein operates within cofactor biosynthesis; (R)-pantothenate biosynthesis; (R)-pantothenate from (R)-pantoate and beta-alanine: step 1/1. Its function is as follows. Catalyzes the condensation of pantoate with beta-alanine in an ATP-dependent reaction via a pantoyl-adenylate intermediate. The polypeptide is Pantothenate synthetase (Methylobacillus flagellatus (strain ATCC 51484 / DSM 6875 / VKM B-1610 / KT)).